Consider the following 1196-residue polypeptide: MNTDSGGCARKRAAMSVTLTSVKRVQSSPNLLAAGRESHSPDSAWRSYNGRNPETLNGDATYSSLAAKGFRSVRPNLQDKKSPTQSHITINGNSGGAVSPVSYYQRPFSPSAYSLPASLNSSIIMPHGRSLDSAETYSQHAQSLDGTMGSSIPLYRSSEEEKRVTVIKAPHYPGIGPVDESGIPTAIRTTVDRPKDWYKTMFKQIHMVHKPDEDTDMYNTPYTYNAGLYNSPYSAQSHPAAKTQTYRPLSKSHSDNGTDAFKEATSPVPPPHVPPRPRDQSSTEKHDWDPPDRKVDTRKFRSEPRSIFEYEPGKSSILQHERPVSVYQSSIDRSLERPSSSASMAGDFRKRRKSEPAVGPPRGLGDHSSSRTSPGRADLPGSSSTFTTSFISSSPSSPSRAQGGDDSKMCPPLCSYSGLNGSPSSELECCGAYRRHLDVPQDSQRAITFKNGWQMARQNAEIWSSTEEAVSPKIKSRSCDDLLNDDCGSFPDPKTKSESMGSLLCDEGSKESDPMTWTSPYIPEVCGNSRSRLKHRSAHNAPGFLKMYKKMHRINRKDLMNSEVICSVKSRILQYEKEQQHRGLLHGWSQSSTEEVPRDVVPTRISEFEKLIQKSKSMPNLGDEMLSPVTLEPPQNGLCPKRRFSIESLLEEETQVRHPSQGQRSCKSNTLVPIHIEVTSDEQPRTHMEFSDSDQDGVVSDHSDNVHVERSSFCSESDFDHFSFTSSESFYGSSHHHHHHHHHHGHFISSCKGRCPASYTRFTTMLKHERAKHENIDRPRRQDMDPGLSKLAFLVSPVPFRRKKVLTPQKQTEQAKCKASVVEALDSALKDICDQIKAEKRRGSLPDNSILHRLISELLPQIPKRNSSLNALKRSPMHQPFHPLPQDGAIHCPLYQNDCGRMPHSASFPDVDTTSSYHAQDYGSVLSLQDHESPRSYSSTLTDLGRSVSRERRGTPEKEVKLPAKAVYDFKAQTSKELSFKKGDTVYILRKIDQNWYEGEHHGRVGIFPISYVEKLTPPEKAQPARPPPPVQPGEIGEAIAKYNFNADTNVELSLRKGDRIILLKRVDQNWYEGKIPGTNRQGIFPVSYVEVVKRNTKGSEDYPDPPLPHSYSSDRIYSLSSNKPQRPVFSHENIQGGGEPFQALYNYTPRNEDELELRESDVVDVMEKCDDGWFVGTSRRTKFFGTFPGNYVKRL.

Disordered regions lie at residues 25 to 57 (VQSSPNLLAAGRESHSPDSAWRSYNGRNPETLN) and 75 to 95 (PNLQDKKSPTQSHITINGNSG). Phosphoserine is present on residues Ser-27, Ser-28, and Ser-40. Residues 83–92 (PTQSHITING) show a composition bias toward polar residues. Phosphoserine is present on residues Ser-130 and Ser-143. The residue at position 148 (Met-148) is an Alanine amide. One can recognise a SoHo domain in the interval 166–227 (VIKAPHYPGI…YNTPYTYNAG (62 aa)). Polar residues predominate over residues 235–247 (AQSHPAAKTQTYR). Disordered stretches follow at residues 235 to 314 (AQSH…EPGK) and 329 to 407 (SSID…GDDS). 2 stretches are compositionally biased toward basic and acidic residues: residues 252–262 (SHSDNGTDAFK) and 276–312 (RPRDQSSTEKHDWDPPDRKVDTRKFRSEPRSIFEYEP). Ser-254 carries the post-translational modification Phosphoserine. Residues 329–343 (SSIDRSLERPSSSAS) are compositionally biased toward polar residues. Phosphoserine occurs at positions 334, 340, 343, and 354. Position 372 is a phosphothreonine (Thr-372). Position 382 is a phosphoserine (Ser-382). The segment covering 382-399 (SSSTFTTSFISSSPSSPS) has biased composition (low complexity). A Phosphothreonine modification is found at Thr-387. Residues Ser-392, Ser-393, Ser-394, Ser-396, Ser-397, Ser-399, Ser-478, Ser-589, Ser-592, Ser-645, Ser-648, Ser-844, and Ser-938 each carry the phosphoserine modification. Residues 929–958 (QDHESPRSYSSTLTDLGRSVSRERRGTPEK) form a disordered region. The segment covering 948–958 (VSRERRGTPEK) has biased composition (basic and acidic residues). SH3 domains lie at 959-1018 (EVKL…KLTP) and 1034-1095 (GEIG…VVKR). A phosphoserine mark is found at Ser-1113 and Ser-1119. The region spanning 1137-1196 (GGGEPFQALYNYTPRNEDELELRESDVVDVMEKCDDGWFVGTSRRTKFFGTFPGNYVKRL) is the SH3 3 domain.

In terms of assembly, interacts with ABL1/c-Abl, ABL2/v-Abl/Arg, ACTN, CBL and PALLD. Interacts with ABL, CBL, DNM1, DNM2, FLOT1, AFDN, PTK2B/PYK2, SAPAP, SPTAN1, SYNJ1, SYNJ2, VCL/vinculin and WASF. Interacts with PTPN12 and WASF1 via its SH3 domains; this interaction may mediate the partial PTPN12 and WASF1 translocation to focal adhesion sites. Post-translationally, ubiquitinated by CBL. Expressed in brain; found in synapses in cerebellum.

It is found in the cytoplasm. The protein localises to the perinuclear region. It localises to the apical cell membrane. The protein resides in the cell junction. Its subcellular location is the focal adhesion. It is found in the cell projection. The protein localises to the lamellipodium. Adapter protein that plays a role in the assembling of signaling complexes, being a link between ABL kinases and actin cytoskeleton. Can form complex with ABL1 and CBL, thus promoting ubiquitination and degradation of ABL1. May play a role in the regulation of pancreatic cell adhesion, possibly by acting on WASF1 phosphorylation, enhancing phosphorylation by ABL1, as well as dephosphorylation by PTPN12. Isoform 2 increases water and sodium absorption in the intestine and gall-bladder. In Rattus norvegicus (Rat), this protein is Sorbin and SH3 domain-containing protein 2 (Sorbs2).